Here is a 208-residue protein sequence, read N- to C-terminus: FMN-dependent NADH:quinone oxidoreductase (208 aa).

FMN contacts are provided by residues 17–19 (SNS), 99–102 (MWNL), and 143–146 (SRGG).

Belongs to the azoreductase type 1 family. In terms of assembly, homodimer. The cofactor is FMN.

The catalysed reaction is 2 a quinone + NADH + H(+) = 2 a 1,4-benzosemiquinone + NAD(+). It catalyses the reaction N,N-dimethyl-1,4-phenylenediamine + anthranilate + 2 NAD(+) = 2-(4-dimethylaminophenyl)diazenylbenzoate + 2 NADH + 2 H(+). Quinone reductase that provides resistance to thiol-specific stress caused by electrophilic quinones. Functionally, also exhibits azoreductase activity. Catalyzes the reductive cleavage of the azo bond in aromatic azo compounds to the corresponding amines. The sequence is that of FMN-dependent NADH:quinone oxidoreductase from Staphylococcus aureus (strain COL).